The sequence spans 190 residues: Adenylate kinase (190 aa).

Residue 10-15 coordinates ATP; sequence AAGKGT. Residues 30 to 59 form an NMP region; that stretch reads STGDMLRAAIASGSELGQRVSGIMERGELV. AMP contacts are provided by residues Thr31, Arg36, 57–59, 85–88, and Gln92; these read ELV and GFPR. Residues 126–136 are LID; it reads GRFAESGRADD. Arg127 contributes to the ATP binding site. Arg133 and Arg144 together coordinate AMP. Gly172 contacts ATP.

The protein belongs to the adenylate kinase family. As to quaternary structure, monomer.

It is found in the cytoplasm. The enzyme catalyses AMP + ATP = 2 ADP. It participates in purine metabolism; AMP biosynthesis via salvage pathway; AMP from ADP: step 1/1. Functionally, catalyzes the reversible transfer of the terminal phosphate group between ATP and AMP. Plays an important role in cellular energy homeostasis and in adenine nucleotide metabolism. This chain is Adenylate kinase, found in Phenylobacterium zucineum (strain HLK1).